We begin with the raw amino-acid sequence, 185 residues long: Peptidyl-tRNA hydrolase (185 aa).

Tyr-14 contacts tRNA. The active-site Proton acceptor is His-19. Residues Phe-63, Asn-65, and Asn-111 each coordinate tRNA.

Belongs to the PTH family. As to quaternary structure, monomer.

Its subcellular location is the cytoplasm. The catalysed reaction is an N-acyl-L-alpha-aminoacyl-tRNA + H2O = an N-acyl-L-amino acid + a tRNA + H(+). Its function is as follows. Hydrolyzes ribosome-free peptidyl-tRNAs (with 1 or more amino acids incorporated), which drop off the ribosome during protein synthesis, or as a result of ribosome stalling. Functionally, catalyzes the release of premature peptidyl moieties from peptidyl-tRNA molecules trapped in stalled 50S ribosomal subunits, and thus maintains levels of free tRNAs and 50S ribosomes. In Desulfitobacterium hafniense (strain Y51), this protein is Peptidyl-tRNA hydrolase.